The sequence spans 118 residues: MRNRYIESFEKAQIADKNIPQFKAGDTLRVGVKIQEGDKTRVQNFEGICISVRGTGTGKTFTIRKMGANNVGVERIFPLYSDSLESVTLLRVGRVRRAKLYYLRDRSGKSARIKELRK.

It belongs to the bacterial ribosomal protein bL19 family.

In terms of biological role, this protein is located at the 30S-50S ribosomal subunit interface and may play a role in the structure and function of the aminoacyl-tRNA binding site. The sequence is that of Large ribosomal subunit protein bL19 from Wolinella succinogenes (strain ATCC 29543 / DSM 1740 / CCUG 13145 / JCM 31913 / LMG 7466 / NCTC 11488 / FDC 602W) (Vibrio succinogenes).